The chain runs to 273 residues: 4-hydroxy-tetrahydrodipicolinate reductase (273 aa).

NAD(+) contacts are provided by residues 12–17 (GAGGRM) and glutamate 38. NADP(+) is bound at residue arginine 39. NAD(+) contacts are provided by residues 102–104 (GTT) and 126–129 (AANF). The active-site Proton donor/acceptor is histidine 159. Position 160 (histidine 160) interacts with (S)-2,3,4,5-tetrahydrodipicolinate. The active-site Proton donor is lysine 163. 169-170 (GT) provides a ligand contact to (S)-2,3,4,5-tetrahydrodipicolinate.

This sequence belongs to the DapB family. Homotetramer.

It is found in the cytoplasm. The catalysed reaction is (S)-2,3,4,5-tetrahydrodipicolinate + NAD(+) + H2O = (2S,4S)-4-hydroxy-2,3,4,5-tetrahydrodipicolinate + NADH + H(+). The enzyme catalyses (S)-2,3,4,5-tetrahydrodipicolinate + NADP(+) + H2O = (2S,4S)-4-hydroxy-2,3,4,5-tetrahydrodipicolinate + NADPH + H(+). It participates in amino-acid biosynthesis; L-lysine biosynthesis via DAP pathway; (S)-tetrahydrodipicolinate from L-aspartate: step 4/4. Catalyzes the conversion of 4-hydroxy-tetrahydrodipicolinate (HTPA) to tetrahydrodipicolinate. The chain is 4-hydroxy-tetrahydrodipicolinate reductase from Photorhabdus laumondii subsp. laumondii (strain DSM 15139 / CIP 105565 / TT01) (Photorhabdus luminescens subsp. laumondii).